The primary structure comprises 206 residues: Thymidylate kinase (206 aa).

Position 14 to 21 (Gly14 to Ser21) interacts with ATP.

It belongs to the thymidylate kinase family.

The enzyme catalyses dTMP + ATP = dTDP + ADP. Its function is as follows. Phosphorylation of dTMP to form dTDP in both de novo and salvage pathways of dTTP synthesis. The polypeptide is Thymidylate kinase (Rickettsia bellii (strain RML369-C)).